The primary structure comprises 330 residues: Putative [LysW]-L-2-aminoadipate/[LysW]-L-glutamate phosphate reductase (330 aa).

Position 10–13 (10–13 (SGYI)) interacts with NADP(+). The active site involves cysteine 142. Asparagine 297 contributes to the NADP(+) binding site.

This sequence belongs to the NAGSA dehydrogenase family. Type 1 subfamily. LysY sub-subfamily.

It is found in the cytoplasm. The enzyme catalyses [amino-group carrier protein]-C-terminal-N-(1-carboxy-5-oxopentan-1-yl)-L-glutamine + phosphate + NADP(+) = [amino-group carrier protein]-C-terminal-N-(1-carboxy-5-phosphooxy-5-oxopentan-1-yl)-L-glutamine + NADPH + H(+). It catalyses the reaction [amino-group carrier protein]-C-terminal-gamma-(L-glutamyl-5-semialdehyde)-L-glutamate + phosphate + NADP(+) = [amino-group carrier protein]-C-terminal-gamma-(5-phospho-L-glutamyl)-L-glutamate + NADPH + H(+). It participates in amino-acid biosynthesis; L-lysine biosynthesis via AAA pathway; L-lysine from L-alpha-aminoadipate (Thermus route): step 3/5. The protein operates within amino-acid biosynthesis; L-arginine biosynthesis. In terms of biological role, involved in both the arginine and lysine biosynthetic pathways. The polypeptide is Putative [LysW]-L-2-aminoadipate/[LysW]-L-glutamate phosphate reductase (Pyrococcus furiosus (strain ATCC 43587 / DSM 3638 / JCM 8422 / Vc1)).